Reading from the N-terminus, the 640-residue chain is Threonine--tRNA ligase (640 aa).

Residues 1 to 59 (MKIKVVLPDGSEREYEKGTKPMEIAREVGIKKVIGAVVDEELWDLKRPLERDCRIRFVT) enclose the TGS domain. A catalytic region spans residues 240–531 (DHRKLGPQLE…LIEHFAGAFP (292 aa)). The Zn(2+) site is built by C332, H383, and H508.

This sequence belongs to the class-II aminoacyl-tRNA synthetase family. Homodimer. The cofactor is Zn(2+).

The protein resides in the cytoplasm. The catalysed reaction is tRNA(Thr) + L-threonine + ATP = L-threonyl-tRNA(Thr) + AMP + diphosphate + H(+). Catalyzes the attachment of threonine to tRNA(Thr) in a two-step reaction: L-threonine is first activated by ATP to form Thr-AMP and then transferred to the acceptor end of tRNA(Thr). Also edits incorrectly charged L-seryl-tRNA(Thr). This Thermotoga neapolitana (strain ATCC 49049 / DSM 4359 / NBRC 107923 / NS-E) protein is Threonine--tRNA ligase.